Here is a 462-residue protein sequence, read N- to C-terminus: uncharacterized protein (462 aa).

In terms of domain architecture, TRAM spans 12 to 70 (MLKKNDIIQVAISDLSHEGAGVAKHDGFVFFVDNALPEEVIDMRVLKVNKNSGFGKVEA). S-adenosyl-L-methionine contacts are provided by Gln-294, Tyr-323, Glu-344, and Asp-392. The active-site Nucleophile is the Cys-419.

The protein belongs to the class I-like SAM-binding methyltransferase superfamily. RNA M5U methyltransferase family.

This is an uncharacterized protein from Streptococcus pyogenes serotype M1.